A 615-amino-acid chain; its full sequence is Hypermethylated in cancer 2 protein (615 aa).

Residues 46–109 (CDVIIMVENS…IYTGKLLPSD (64 aa)) form the BTB domain. Positions 144–167 (KPFGSGRAGSTGMGRPPRSQRLST) are disordered. Ser-166, Ser-169, and Ser-197 each carry phosphoserine. Disordered stretches follow at residues 182–208 (RKGA…GSNQ) and 229–421 (GCSS…SGHA). Residues 246 to 250 (GLDLS) are binding to CtBP. A compositionally biased stretch (low complexity) spans 280 to 296 (SPPAASAPPVANSASYS). Over residues 336 to 356 (KKEWGKKEPVAGSPFERREAG) the composition is skewed to basic and acidic residues. Position 348 is a phosphoserine (Ser-348). Positions 379 to 388 (ASGAGPSGPY) are enriched in low complexity. Residue Ser-412 is modified to Phosphoserine. 5 C2H2-type zinc fingers span residues 442 to 469 (YVCI…EEEL), 505 to 532 (FKCS…LTRP), 533 to 560 (FPCN…GLKP), 561 to 588 (FACD…GEKP), and 589 to 615 (YECQ…TSPS).

The protein belongs to the krueppel C2H2-type zinc-finger protein family. Hic subfamily. In terms of assembly, self-associates. Interacts with HIC1. In terms of tissue distribution, highest levels in cerebellum.

The protein resides in the nucleus. Transcriptional repressor. This chain is Hypermethylated in cancer 2 protein (HIC2), found in Homo sapiens (Human).